Here is a 188-residue protein sequence, read N- to C-terminus: dCTP deaminase (188 aa).

DCTP is bound by residues 111–116, 135–137, Q156, Y170, and Q180; these read KSTYAR and TLE. Catalysis depends on E137, which acts as the Proton donor/acceptor.

It belongs to the dCTP deaminase family. As to quaternary structure, homotrimer.

The catalysed reaction is dCTP + H2O + H(+) = dUTP + NH4(+). It functions in the pathway pyrimidine metabolism; dUMP biosynthesis; dUMP from dCTP (dUTP route): step 1/2. Functionally, catalyzes the deamination of dCTP to dUTP. This chain is dCTP deaminase, found in Ralstonia pickettii (strain 12J).